The chain runs to 163 residues: NADH-quinone oxidoreductase subunit I (163 aa).

2 consecutive 4Fe-4S ferredoxin-type domains span residues 54–84 (LRRY…IESE) and 94–123 (TRYD…ETRI). Cysteine 64, cysteine 67, cysteine 70, cysteine 74, cysteine 103, cysteine 106, cysteine 109, and cysteine 113 together coordinate [4Fe-4S] cluster.

It belongs to the complex I 23 kDa subunit family. In terms of assembly, NDH-1 is composed of 14 different subunits. Subunits NuoA, H, J, K, L, M, N constitute the membrane sector of the complex. It depends on [4Fe-4S] cluster as a cofactor.

It is found in the cell inner membrane. It carries out the reaction a quinone + NADH + 5 H(+)(in) = a quinol + NAD(+) + 4 H(+)(out). Functionally, NDH-1 shuttles electrons from NADH, via FMN and iron-sulfur (Fe-S) centers, to quinones in the respiratory chain. The immediate electron acceptor for the enzyme in this species is believed to be ubiquinone. Couples the redox reaction to proton translocation (for every two electrons transferred, four hydrogen ions are translocated across the cytoplasmic membrane), and thus conserves the redox energy in a proton gradient. The sequence is that of NADH-quinone oxidoreductase subunit I from Methylobacillus flagellatus (strain ATCC 51484 / DSM 6875 / VKM B-1610 / KT).